The sequence spans 374 residues: DNA replication and repair protein RecF (374 aa).

30–37 serves as a coordination point for ATP; it reads GNNAQGKS.

The protein belongs to the RecF family.

It is found in the cytoplasm. Functionally, the RecF protein is involved in DNA metabolism; it is required for DNA replication and normal SOS inducibility. RecF binds preferentially to single-stranded, linear DNA. It also seems to bind ATP. The chain is DNA replication and repair protein RecF from Nostoc punctiforme (strain ATCC 29133 / PCC 73102).